The following is a 341-amino-acid chain: Foldase protein PrsA (341 aa).

Residues 1–22 form the signal peptide; sequence MKNIGRLAVTALIAVFIFSVTG. Cysteine 23 carries N-palmitoyl cysteine lipidation. A lipid anchor (S-diacylglycerol cysteine) is attached at cysteine 23. In terms of domain architecture, PpiC spans 199 to 291; it reads PNKMHLAHIL…FGYHIIKCIK (93 aa).

It belongs to the PrsA family.

The protein localises to the cell membrane. The catalysed reaction is [protein]-peptidylproline (omega=180) = [protein]-peptidylproline (omega=0). Plays a major role in protein secretion by helping the post-translocational extracellular folding of several secreted proteins. This chain is Foldase protein PrsA, found in Clostridium kluyveri (strain NBRC 12016).